We begin with the raw amino-acid sequence, 429 residues long: Adenosylhomocysteinase (429 aa).

Substrate-binding residues include Thr-64, Asp-136, and Glu-161. Residue 162–164 (TTT) coordinates NAD(+). Residues Lys-191 and Asp-195 each contribute to the substrate site. NAD(+) contacts are provided by residues Asn-196, 225-230 (GYGWCG), Glu-248, Asn-283, 304-306 (SGH), and Asn-351.

This sequence belongs to the adenosylhomocysteinase family. Requires NAD(+) as cofactor.

The protein localises to the cytoplasm. It catalyses the reaction S-adenosyl-L-homocysteine + H2O = L-homocysteine + adenosine. Its pathway is amino-acid biosynthesis; L-homocysteine biosynthesis; L-homocysteine from S-adenosyl-L-homocysteine: step 1/1. Functionally, may play a key role in the regulation of the intracellular concentration of adenosylhomocysteine. The sequence is that of Adenosylhomocysteinase from Gloeothece citriformis (strain PCC 7424) (Cyanothece sp. (strain PCC 7424)).